The primary structure comprises 566 residues: Glutamate--tRNA ligase (566 aa).

The short motif at 104 to 114 (PNPDGPLHLGN) is the 'HIGH' region element.

The protein belongs to the class-I aminoacyl-tRNA synthetase family. Glutamate--tRNA ligase type 2 subfamily.

Its subcellular location is the cytoplasm. It catalyses the reaction tRNA(Glu) + L-glutamate + ATP = L-glutamyl-tRNA(Glu) + AMP + diphosphate. Its function is as follows. Catalyzes the attachment of glutamate to tRNA(Glu) in a two-step reaction: glutamate is first activated by ATP to form Glu-AMP and then transferred to the acceptor end of tRNA(Glu). This is Glutamate--tRNA ligase from Metallosphaera sedula (strain ATCC 51363 / DSM 5348 / JCM 9185 / NBRC 15509 / TH2).